Here is a 582-residue protein sequence, read N- to C-terminus: Trans-activating transcriptional regulatory protein (582 aa).

The interval 101-131 (QPVVEQPSPSSAYHAESFEHSAGVNQPSATG) is disordered.

The protein belongs to the nucleopolyhedrovirus IE-1 protein family. Homodimer. Interacts with helicase and LEF-3. Phosphorylated.

The protein resides in the host nucleus. In terms of biological role, regulatory transcriptional protein, which trans-activates gene expression from early baculovirus promoters. Can also trans-activate its own promoter, suggesting an autoregulation during infection of host cells. Also promotes viral DNA genome replication via the N-terminal region. This chain is Trans-activating transcriptional regulatory protein (IE1), found in Autographa californica nuclear polyhedrosis virus (AcMNPV).